An 88-amino-acid chain; its full sequence is Large ribosomal subunit protein bL31B (88 aa).

The protein belongs to the bacterial ribosomal protein bL31 family. Type B subfamily. As to quaternary structure, part of the 50S ribosomal subunit.

The polypeptide is Large ribosomal subunit protein bL31B (Bordetella pertussis (strain Tohama I / ATCC BAA-589 / NCTC 13251)).